Reading from the N-terminus, the 637-residue chain is SCF-associated factor 1 (637 aa).

Positions 14–63 (GLSPDIVQATLPFLSSDDIKNLSQTNKYYNTLLDFDHSKILWHELFHKAF) constitute an F-box domain. Ser16 is subject to Phosphoserine. An RCC1 1 repeat occupies 109-202 (AKFYSWGYLK…GFSFQILTES (94 aa)). A disordered region spans residues 242 to 315 (YPRITSRSNG…RTTMPSMGPH (74 aa)). The span at 244–260 (RITSRSNGSTVNTTGTF) shows a compositional bias: polar residues. Ser266 carries the phosphoserine modification. The span at 289-305 (SGGAPAASPGGSHSGVP) shows a compositional bias: low complexity. The stretch at 565-635 (GHLYSWGIES…GWQTGALIIK (71 aa)) is one RCC1 2 repeat.

As to quaternary structure, interacts with AAH1, SKP1 and CDC53. Component of the SCF(SAF1) complex containing CDC53, SKP1, HRT1 and SAF1.

The protein operates within protein modification; protein ubiquitination. Substrate recognition component of a SCF (SKP1-CUL1-F-box protein) E3 ubiquitin-protein ligase complex which mediates the ubiquitination and subsequent proteasomal degradation of target proteins. Targets AAH1 adenine deaminase for proteasome-dependent degradation upon entry into quiescence. Targets also URA7. The polypeptide is SCF-associated factor 1 (SAF1) (Saccharomyces cerevisiae (strain ATCC 204508 / S288c) (Baker's yeast)).